The chain runs to 206 residues: Probable metallo-hydrolase MJ0888 (206 aa).

Zn(2+) is bound by residues His-55, His-57, Asp-59, His-60, His-130, Asp-147, and His-190.

The protein belongs to the metallo-beta-lactamase superfamily. It depends on Zn(2+) as a cofactor.

This is Probable metallo-hydrolase MJ0888 from Methanocaldococcus jannaschii (strain ATCC 43067 / DSM 2661 / JAL-1 / JCM 10045 / NBRC 100440) (Methanococcus jannaschii).